The sequence spans 715 residues: Myosin light chain kinase 3 (715 aa).

The tract at residues 67 to 114 (VTLPNDPSSQHSPEAHTGASEPLKPVSAGESSKALQKAKEISVKSSEP) is disordered. Residues 404–659 (VNPVEVLGGG…ASGCMKHSWL (256 aa)) enclose the Protein kinase domain. ATP-binding positions include 410-418 (LGGGRFGQV) and K433. The active-site Proton acceptor is the D525.

The protein belongs to the protein kinase superfamily. CAMK Ser/Thr protein kinase family. The cofactor is Mg(2+). Phosphorylated on serine residues.

The protein resides in the cytoplasm. It carries out the reaction L-seryl-[myosin light chain] + ATP = O-phospho-L-seryl-[myosin light chain] + ADP + H(+). It catalyses the reaction L-threonyl-[myosin light chain] + ATP = O-phospho-L-threonyl-[myosin light chain] + ADP + H(+). Its function is as follows. Kinase that phosphorylates MYL2 in vitro. Increases cardiomyocyte contractility. Required for sarcomere formation in the developing heart. In Danio rerio (Zebrafish), this protein is Myosin light chain kinase 3 (mylk3).